The following is a 249-amino-acid chain: 2,3-bisphosphoglycerate-dependent phosphoglycerate mutase (249 aa).

Residues 9–16 (RHGQSQWN), 22–23 (TG), arginine 61, 88–91 (ERHY), lysine 99, 115–116 (RR), and 184–185 (GN) each bind substrate. Histidine 10 functions as the Tele-phosphohistidine intermediate in the catalytic mechanism. The Proton donor/acceptor role is filled by glutamate 88.

Belongs to the phosphoglycerate mutase family. BPG-dependent PGAM subfamily. As to quaternary structure, homodimer.

The catalysed reaction is (2R)-2-phosphoglycerate = (2R)-3-phosphoglycerate. Its pathway is carbohydrate degradation; glycolysis; pyruvate from D-glyceraldehyde 3-phosphate: step 3/5. Functionally, catalyzes the interconversion of 2-phosphoglycerate and 3-phosphoglycerate. This Xanthomonas axonopodis pv. citri (strain 306) protein is 2,3-bisphosphoglycerate-dependent phosphoglycerate mutase.